The chain runs to 299 residues: Junctional adhesion molecule A (299 aa).

The first 27 residues, 1-27, serve as a signal peptide directing secretion; the sequence is MGTKAQVERKLLCLFILAILLCSLALG. 2 consecutive Ig-like V-type domains span residues 28–125 and 135–228; these read SVTV…VKVK and PTVN…NAVR. Residues 28-238 are Extracellular-facing; that stretch reads SVTVHSSEPE…MEAVERNVGV (211 aa). Intrachain disulfides connect C50–C109 and C153–C212. N-linked (GlcNAc...) asparagine glycosylation is present at N185. The chain crosses the membrane as a helical span at residues 239–259; the sequence is IVAAVLVTLILLGILVFGIWF. Residues 260 to 299 are Cytoplasmic-facing; the sequence is AYSRGHFDRTKKGTSSKKVIYSQPSARSEGEFKQTSSFLV. 3 positions are modified to phosphoserine: S281, S284, and S287.

It belongs to the immunoglobulin superfamily. Interacts with the ninth PDZ domain of MPDZ. Interacts with the first PDZ domain of PARD3. The association between PARD3 and PARD6B probably disrupts this interaction. Interacts with ITGAL (via I-domain). Interacts with CD151. In terms of assembly, (Microbial infection) Interacts with Mammalian reovirus sigma-1 capsid protein. As to quaternary structure, (Microbial infection) Interacts with Human Rotavirus strain Wa vp4 capsid protein. N-glycosylated. Post-translationally, (Microbial infection) Cleaved by H.pylori virulence factor PqqE. Cleavage leads to altered tight junction functions. As to expression, expressed in endothelium, epithelium and leukocytes (at protein level).

The protein localises to the cell junction. It is found in the tight junction. The protein resides in the cell membrane. In terms of biological role, seems to play a role in epithelial tight junction formation. Appears early in primordial forms of cell junctions and recruits PARD3. The association of the PARD6-PARD3 complex may prevent the interaction of PARD3 with JAM1, thereby preventing tight junction assembly. Plays a role in regulating monocyte transmigration involved in integrity of epithelial barrier. Ligand for integrin alpha-L/beta-2 involved in memory T-cell and neutrophil transmigration. Involved in platelet activation. Functionally, (Microbial infection) Acts as a receptor for Mammalian reovirus sigma-1. (Microbial infection) Acts as a receptor for Human Rotavirus strain Wa. The sequence is that of Junctional adhesion molecule A (F11R) from Homo sapiens (Human).